Reading from the N-terminus, the 245-residue chain is DNA polymerase sliding clamp (245 aa).

The protein belongs to the PCNA family. In terms of assembly, homotrimer. The subunits circularize to form a toroid; DNA passes through its center. Replication factor C (RFC) is required to load the toroid on the DNA.

Its function is as follows. Sliding clamp subunit that acts as a moving platform for DNA processing. Responsible for tethering the catalytic subunit of DNA polymerase and other proteins to DNA during high-speed replication. This chain is DNA polymerase sliding clamp, found in Picrophilus torridus (strain ATCC 700027 / DSM 9790 / JCM 10055 / NBRC 100828 / KAW 2/3).